The primary structure comprises 342 residues: Succinylglutamate desuccinylase (342 aa).

3 residues coordinate Zn(2+): His63, Glu66, and His155. Glu219 is an active-site residue.

The protein belongs to the AspA/AstE family. Succinylglutamate desuccinylase subfamily. The cofactor is Zn(2+).

The enzyme catalyses N-succinyl-L-glutamate + H2O = L-glutamate + succinate. It functions in the pathway amino-acid degradation; L-arginine degradation via AST pathway; L-glutamate and succinate from L-arginine: step 5/5. Transforms N(2)-succinylglutamate into succinate and glutamate. The protein is Succinylglutamate desuccinylase of Vibrio parahaemolyticus serotype O3:K6 (strain RIMD 2210633).